The primary structure comprises 90 residues: U7-theraphotoxin-Hhn1a 6 (90 aa).

A signal peptide spans 1–19; the sequence is MKTAIFTVVLALAVFAVLS. Positions 20–50 are excised as a propeptide; that stretch reads FGWEANEKALSEEFTELIHEKEAASEAEARE. 3 cysteine pairs are disulfide-bonded: C51-C65, C58-C70, and C64-C81.

It belongs to the neurotoxin 10 (Hwtx-1) family. 13 (Hntx-13) subfamily. As to expression, expressed by the venom gland.

The protein localises to the secreted. Ion channel inhibitor. This chain is U7-theraphotoxin-Hhn1a 6, found in Cyriopagopus hainanus (Chinese bird spider).